We begin with the raw amino-acid sequence, 428 residues long: 3-phosphoshikimate 1-carboxyvinyltransferase (428 aa).

Lys-23, Ser-24, and Arg-28 together coordinate 3-phosphoshikimate. Lys-23 is a binding site for phosphoenolpyruvate. 2 residues coordinate phosphoenolpyruvate: Gly-97 and Arg-125. 3-phosphoshikimate contacts are provided by Ser-170, Ser-171, Gln-172, Ser-198, Asp-314, Asn-338, and Lys-342. Residue Gln-172 participates in phosphoenolpyruvate binding. The Proton acceptor role is filled by Asp-314. Phosphoenolpyruvate is bound by residues Arg-346, Arg-388, and Lys-413.

This sequence belongs to the EPSP synthase family. Monomer.

Its subcellular location is the cytoplasm. The catalysed reaction is 3-phosphoshikimate + phosphoenolpyruvate = 5-O-(1-carboxyvinyl)-3-phosphoshikimate + phosphate. It participates in metabolic intermediate biosynthesis; chorismate biosynthesis; chorismate from D-erythrose 4-phosphate and phosphoenolpyruvate: step 6/7. In terms of biological role, catalyzes the transfer of the enolpyruvyl moiety of phosphoenolpyruvate (PEP) to the 5-hydroxyl of shikimate-3-phosphate (S3P) to produce enolpyruvyl shikimate-3-phosphate and inorganic phosphate. This is 3-phosphoshikimate 1-carboxyvinyltransferase from Baumannia cicadellinicola subsp. Homalodisca coagulata.